Reading from the N-terminus, the 456-residue chain is Adenylosuccinate lyase (456 aa).

Residues 15-16, 90-92, and 122-123 each bind N(6)-(1,2-dicarboxyethyl)-AMP; these read RY, NHD, and TS. His171 (proton donor/acceptor) is an active-site residue. Gln247 contributes to the N(6)-(1,2-dicarboxyethyl)-AMP binding site. The Proton donor/acceptor role is filled by Ser295. Residues Ser296, 301–303, Asn309, Arg335, and 340–344 each bind N(6)-(1,2-dicarboxyethyl)-AMP; these read KVN and STVLR.

This sequence belongs to the lyase 1 family. Adenylosuccinate lyase subfamily. Homotetramer. Residues from neighboring subunits contribute catalytic and substrate-binding residues to each active site.

It carries out the reaction N(6)-(1,2-dicarboxyethyl)-AMP = fumarate + AMP. The enzyme catalyses (2S)-2-[5-amino-1-(5-phospho-beta-D-ribosyl)imidazole-4-carboxamido]succinate = 5-amino-1-(5-phospho-beta-D-ribosyl)imidazole-4-carboxamide + fumarate. The protein operates within purine metabolism; AMP biosynthesis via de novo pathway; AMP from IMP: step 2/2. It functions in the pathway purine metabolism; IMP biosynthesis via de novo pathway; 5-amino-1-(5-phospho-D-ribosyl)imidazole-4-carboxamide from 5-amino-1-(5-phospho-D-ribosyl)imidazole-4-carboxylate: step 2/2. Its function is as follows. Catalyzes two reactions in de novo purine nucleotide biosynthesis. Catalyzes the breakdown of 5-aminoimidazole- (N-succinylocarboxamide) ribotide (SAICAR or 2-[5-amino-1-(5-phospho-beta-D-ribosyl)imidazole-4-carboxamido]succinate) to 5-aminoimidazole-4-carboxamide ribotide (AICAR or 5-amino-1-(5-phospho-beta-D-ribosyl)imidazole-4-carboxamide) and fumarate, and of adenylosuccinate (ADS or N(6)-(1,2-dicarboxyethyl)-AMP) to adenosine monophosphate (AMP) and fumarate. The sequence is that of Adenylosuccinate lyase (purB) from Buchnera aphidicola subsp. Acyrthosiphon pisum (strain APS) (Acyrthosiphon pisum symbiotic bacterium).